Here is a 1330-residue protein sequence, read N- to C-terminus: Paired amphipathic helix protein Sin3-like 3 (1330 aa).

PAH domains follow at residues 8 to 78 and 94 to 164; these read QKLT…LPKG and KRVE…LPDT. The span at 191–246 shows a compositional bias: basic and acidic residues; sequence IITPHPDHDYGTEHIDQDRERPIKKENKEHMRGTNKENEHRDARDFEPHSKKEQFL. The interval 191 to 281 is disordered; that stretch reads IITPHPDHDY…VPSSSTYDEK (91 aa). Positions 262 to 277 are enriched in polar residues; the sequence is ISNQSKLSGAVPSSST. In terms of domain architecture, PAH 3 spans 283-351; sequence AMKSYSQDLA…DSFIEFLVQC (69 aa). Disordered stretches follow at residues 373 to 401, 718 to 775, 789 to 808, 882 to 906, and 920 to 1002; these read GEGK…DRDH, NQNV…GRTS, KNVV…SIER, QEMA…FEED, and SKAN…EAEC. Positions 383–401 are enriched in basic and acidic residues; sequence DNDRDQEHKRDDGLRDRDH. Residues 723-734 are compositionally biased toward low complexity; sequence SGSSSAGESEGS. Residues 789 to 800 are compositionally biased toward basic and acidic residues; that stretch reads KNVVTSDEKPES. The span at 920–932 shows a compositional bias: polar residues; sequence SKANDSTGNNISG. Composition is skewed to basic and acidic residues over residues 933 to 949 and 956 to 968; these read DRSR…RAEN and NAAR…RNEY. Acidic residues predominate over residues 980-989; sequence GGEDPEDDLD. Residue Ser-996 is modified to Phosphoserine.

As to quaternary structure, interacts with ERF7 and the histone deacetylase HDA19.

It is found in the nucleus. Its function is as follows. Acts as a transcriptional repressor. Interacts with ERF7 to repress genes in abscisic acid and drought stress responses. The heterodimer represses transcription by tethering SNL3 to DNA. This is Paired amphipathic helix protein Sin3-like 3 (SNL3) from Arabidopsis thaliana (Mouse-ear cress).